A 303-amino-acid chain; its full sequence is Elongation factor Ts (303 aa).

The tract at residues 80-83 is involved in Mg(2+) ion dislocation from EF-Tu; that stretch reads TDFV.

Belongs to the EF-Ts family.

The protein localises to the cytoplasm. Functionally, associates with the EF-Tu.GDP complex and induces the exchange of GDP to GTP. It remains bound to the aminoacyl-tRNA.EF-Tu.GTP complex up to the GTP hydrolysis stage on the ribosome. The chain is Elongation factor Ts from Clostridium perfringens (strain SM101 / Type A).